The primary structure comprises 549 residues: Glucose-6-phosphate isomerase (549 aa).

The Proton donor role is filled by E355. Active-site residues include H386 and K514.

It belongs to the GPI family.

The protein resides in the cytoplasm. The enzyme catalyses alpha-D-glucose 6-phosphate = beta-D-fructose 6-phosphate. Its pathway is carbohydrate biosynthesis; gluconeogenesis. It functions in the pathway carbohydrate degradation; glycolysis; D-glyceraldehyde 3-phosphate and glycerone phosphate from D-glucose: step 2/4. In terms of biological role, catalyzes the reversible isomerization of glucose-6-phosphate to fructose-6-phosphate. The chain is Glucose-6-phosphate isomerase from Salmonella paratyphi A (strain AKU_12601).